Here is a 163-residue protein sequence, read N- to C-terminus: UPF0763 protein JJD26997_0796 (163 aa).

The protein belongs to the UPF0763 family.

The sequence is that of UPF0763 protein JJD26997_0796 from Campylobacter jejuni subsp. doylei (strain ATCC BAA-1458 / RM4099 / 269.97).